Consider the following 92-residue polypeptide: Small ribosomal subunit protein uS19 (92 aa).

This sequence belongs to the universal ribosomal protein uS19 family.

Protein S19 forms a complex with S13 that binds strongly to the 16S ribosomal RNA. The polypeptide is Small ribosomal subunit protein uS19 (Pelobacter propionicus (strain DSM 2379 / NBRC 103807 / OttBd1)).